A 382-amino-acid polypeptide reads, in one-letter code: Cell division cycle-associated protein 7 (382 aa).

2 disordered regions span residues 68–118 (PLRV…EDGM) and 151–217 (GRHS…EDKY). The segment covering 105–117 (SEEEEEEEEEEDG) has biased composition (acidic residues). An interaction with MYC region spans residues 152 to 177 (RHSLPGHRAKDSKSPRRRTFPGVATR). A Nuclear localization signal motif is present at residues 167–183 (RRRTFPGVATRRNPERR). The residue at position 170 (Thr170) is a Phosphothreonine. At Ser197 the chain carries Phosphoserine. Thr203 carries the phosphothreonine modification. Positions 203–215 (TEEEEEEEEEEED) are enriched in acidic residues. Residue Lys216 forms a Glycyl lysine isopeptide (Lys-Gly) (interchain with G-Cter in SUMO2) linkage. Position 225 is a phosphoserine (Ser225). The mediates transcriptional activity stretch occupies residues 258–382 (EEEIRNICSN…SLKQEFEMQA (125 aa)).

Interacts with MYC (via C-terminus), YWHAE and YWHAZ. In terms of processing, phosphorylation at Thr-170 promotes interaction with YWHAE and YWHAZ, dissociation from MYC and sequestration in the cytoplasm.

It is found in the nucleus. Its subcellular location is the cytoplasm. Functionally, participates in MYC-mediated cell transformation and apoptosis; induces anchorage-independent growth and clonogenicity in lymphoblastoid cells. Insufficient to induce tumorigenicity when overexpressed but contributes to MYC-mediated tumorigenesis. May play a role as transcriptional regulator. This Mus musculus (Mouse) protein is Cell division cycle-associated protein 7 (Cdca7).